Reading from the N-terminus, the 443-residue chain is Amino-acid acetyltransferase (443 aa).

An N-acetyltransferase domain is found at 296-435; that stretch reads EQIRRATIND…KEMYNYQRRS (140 aa).

It belongs to the acetyltransferase family. ArgA subfamily. In terms of assembly, homohexamer.

Its subcellular location is the cytoplasm. It carries out the reaction L-glutamate + acetyl-CoA = N-acetyl-L-glutamate + CoA + H(+). It participates in amino-acid biosynthesis; L-arginine biosynthesis; N(2)-acetyl-L-ornithine from L-glutamate: step 1/4. This chain is Amino-acid acetyltransferase, found in Enterobacter sp. (strain 638).